A 44-amino-acid chain; its full sequence is Protein PsbN (44 aa).

The chain crosses the membrane as a helical span at residues 6 to 26 (FFFSLFVWCLLLSITAYSLYV).

Belongs to the PsbN family.

It is found in the plastid. Its subcellular location is the chloroplast thylakoid membrane. Its function is as follows. May play a role in photosystem I and II biogenesis. The sequence is that of Protein PsbN from Tupiella akineta (Green alga).